Reading from the N-terminus, the 542-residue chain is ATP synthase subunit alpha (542 aa).

176 to 183 (GDRQTGKT) is an ATP binding site.

This sequence belongs to the ATPase alpha/beta chains family. As to quaternary structure, F-type ATPases have 2 components, CF(1) - the catalytic core - and CF(0) - the membrane proton channel. CF(1) has five subunits: alpha(3), beta(3), gamma(1), delta(1), epsilon(1). CF(0) has three main subunits: a(1), b(2) and c(9-12). The alpha and beta chains form an alternating ring which encloses part of the gamma chain. CF(1) is attached to CF(0) by a central stalk formed by the gamma and epsilon chains, while a peripheral stalk is formed by the delta and b chains.

Its subcellular location is the cell membrane. The catalysed reaction is ATP + H2O + 4 H(+)(in) = ADP + phosphate + 5 H(+)(out). Its function is as follows. Produces ATP from ADP in the presence of a proton gradient across the membrane. The alpha chain is a regulatory subunit. This is ATP synthase subunit alpha from Tropheryma whipplei (strain TW08/27) (Whipple's bacillus).